The chain runs to 72 residues: Teretoxin Tan11.1 (72 aa).

Positions 1–21 (MLATKMSVTFCFLLMLTTVML) are cleaved as a signal peptide. Residues 22–31 (PTEAKTVAGR) constitute a propeptide that is removed on maturation.

Belongs to the teretoxin H (TH) superfamily. In terms of processing, contains 4 disulfide bonds. As to expression, expressed by the venom duct.

It is found in the secreted. In Terebra anilis (Auger snail), this protein is Teretoxin Tan11.1.